The following is a 417-amino-acid chain: Serine hydroxymethyltransferase 2 (417 aa).

Residues Leu-121 and 125 to 127 each bind (6S)-5,6,7,8-tetrahydrofolate; that span reads GHL. Lys-230 bears the N6-(pyridoxal phosphate)lysine mark. Residue 355 to 357 participates in (6S)-5,6,7,8-tetrahydrofolate binding; the sequence is SPF.

Belongs to the SHMT family. In terms of assembly, homodimer. Pyridoxal 5'-phosphate serves as cofactor.

Its subcellular location is the cytoplasm. The catalysed reaction is (6R)-5,10-methylene-5,6,7,8-tetrahydrofolate + glycine + H2O = (6S)-5,6,7,8-tetrahydrofolate + L-serine. It participates in one-carbon metabolism; tetrahydrofolate interconversion. The protein operates within amino-acid biosynthesis; glycine biosynthesis; glycine from L-serine: step 1/1. Functionally, catalyzes the reversible interconversion of serine and glycine with tetrahydrofolate (THF) serving as the one-carbon carrier. This reaction serves as the major source of one-carbon groups required for the biosynthesis of purines, thymidylate, methionine, and other important biomolecules. Also exhibits THF-independent aldolase activity toward beta-hydroxyamino acids, producing glycine and aldehydes, via a retro-aldol mechanism. This is Serine hydroxymethyltransferase 2 from Pseudomonas savastanoi pv. phaseolicola (strain 1448A / Race 6) (Pseudomonas syringae pv. phaseolicola (strain 1448A / Race 6)).